The sequence spans 329 residues: BTB/POZ domain-containing protein At1g55760 (329 aa).

Residues 164-231 (TDITINASDG…IYGNIQNEDF (68 aa)) enclose the BTB domain.

It participates in protein modification; protein ubiquitination. Functionally, may act as a substrate-specific adapter of an E3 ubiquitin-protein ligase complex (CUL3-RBX1-BTB) which mediates the ubiquitination and subsequent proteasomal degradation of target proteins. This chain is BTB/POZ domain-containing protein At1g55760, found in Arabidopsis thaliana (Mouse-ear cress).